The sequence spans 418 residues: MANKLRNYTINFGPQHPAAHGVLRMILELEGETIVRADPHIGLLHRGTEKLAETKTYLQALPYMDRLDYVSMMVNEQAYCLAVEKLAGIDVPIRAQYIRVMFAEVTRILNHLMGIGSHAFDIGAMTAILYAFRDREELMDLYEAVSGARMHAAYFRPGGVYRDLPDFMPKYESSKFRNAKVLKQLNESREGTMLDFIDAFCERFPKNIDTLETLLTDNRIWKQRTVGIGVVTPERAMQKGFTGVMLRGSGVEWDVRKKQPYEMYDKMDFDIPVGVNGDCYDRYLCRMEEMRQSVRIIKQCSEWLRVNPGPVITTNHKFAPPKRTEMKTGMEDLIHHFKLFTEGMHVPEGETYTAVEHPKGEFGVYIISDGANKPYRLKIRAPGFAHLQGMDEMAKGHMLADVVAIIGTQDIVFGEVDR.

It belongs to the complex I 49 kDa subunit family. NDH-1 is composed of 14 different subunits. Subunits NuoB, C, D, E, F, and G constitute the peripheral sector of the complex.

It is found in the cell inner membrane. It carries out the reaction a quinone + NADH + 5 H(+)(in) = a quinol + NAD(+) + 4 H(+)(out). Its function is as follows. NDH-1 shuttles electrons from NADH, via FMN and iron-sulfur (Fe-S) centers, to quinones in the respiratory chain. The immediate electron acceptor for the enzyme in this species is believed to be ubiquinone. Couples the redox reaction to proton translocation (for every two electrons transferred, four hydrogen ions are translocated across the cytoplasmic membrane), and thus conserves the redox energy in a proton gradient. The protein is NADH-quinone oxidoreductase subunit D of Neisseria meningitidis serogroup C (strain 053442).